Here is a 3130-residue protein sequence, read N- to C-terminus: DNA polymerase zeta catalytic subunit (3130 aa).

Disordered regions lie at residues 263-295 (AIWE…VPAT), 425-457 (GYRG…NEPQ), 487-510 (LCRN…MEWS), 524-548 (LDGT…SSVI), 697-728 (PNEN…EKGN), and 817-871 (VTYK…EKDN). The span at 286 to 295 (SQDHRFVPAT) shows a compositional bias: basic and acidic residues. Acidic residues predominate over residues 497-509 (EDDDSSSGEEMEW). Polar residues-rich tracts occupy residues 533–548 (DNPL…SSVI) and 699–728 (ENTL…EKGN). A compositionally biased stretch (basic residues) spans 828–838 (SRLKLNKRKLA). The segment covering 842 to 854 (ETSTKSSETGSTK) has biased composition (low complexity). The segment covering 855-866 (DNFIQNNPCNSN) has biased composition (polar residues). S1030 bears the Phosphoserine mark. Disordered stretches follow at residues 1035–1095 (YPIY…YNAE), 1162–1231 (SRIG…DEKI), and 1537–1600 (RQQK…KLLK). Residue T1041 is modified to Phosphothreonine. Basic residues-rich tracts occupy residues 1043–1061 (KKSH…KTGK) and 1166–1179 (KTSR…KSKA). Residues 1213 to 1231 (KTNEKGTSRKHTTLKDEKI) show a composition bias toward basic and acidic residues. The span at 1540 to 1565 (KAQNANTTQDPLSNKHQPNKNISGSL) shows a compositional bias: polar residues. The segment covering 1570–1589 (ANKRTRSVTSPRKPRTPRST) has biased composition (basic residues). The span at 1590–1600 (KQKEKIPKLLK) shows a compositional bias: basic and acidic residues. Residue S1724 is modified to Phosphoserine. Disordered stretches follow at residues 1845-1882 (NDML…KPLM), 1962-1984 (NPRP…SNSP), 2017-2050 (ERSK…PVVP), 2080-2150 (PTTG…SPVE), and 2216-2236 (APGL…NKKG). The interval 1847–1898 (MLTPTPDSSPRSTSSPSQSKNGSFTPRTANILKPLMSPPSREEIMATLLDHD) is mediates interaction with MAD2L2. The span at 1849–1865 (TPTPDSSPRSTSSPSQS) shows a compositional bias: low complexity. S1967 carries the phosphoserine modification. Polar residues predominate over residues 2080 to 2092 (PTTGCSQTASESQ). Low complexity predominate over residues 2113 to 2122 (YYISYSSPDS). The segment covering 2221–2236 (PLSTEPKTQKLSNKKG) has biased composition (polar residues). 4 residues coordinate Zn(2+): C3042, C3045, C3054, and C3057. The segment at 3042–3057 (CPVCDDLTQHGICSKC) adopts a CysA-type zinc-finger fold. [4Fe-4S] cluster-binding residues include C3086, C3089, C3099, and C3104. The short motif at 3086-3104 (CKNCTGCFDRHIPCVSLNC) is the CysB motif element.

The protein belongs to the DNA polymerase type-B family. In terms of assembly, heterodimer with MAD2L2. This dimer forms the minimal DNA polymerase zeta complex (Pol-zeta2), with REV3L bearing DNA polymerase catalytic activity, although its activity is very low in this context. Component of the tetrameric Pol-zeta complex (Pol-zeta4), which consists of REV3L, MAD2L2, POLD2 and POLD3; Pol-zeta4 is the fully active form of DNA polymerase zeta. The cofactor is [4Fe-4S] cluster. In terms of tissue distribution, ubiquitously expressed.

It is found in the nucleus. The enzyme catalyses DNA(n) + a 2'-deoxyribonucleoside 5'-triphosphate = DNA(n+1) + diphosphate. Functionally, catalytic subunit of the DNA polymerase zeta complex, an error-prone polymerase specialized in translesion DNA synthesis (TLS). Lacks an intrinsic 3'-5' exonuclease activity and thus has no proofreading function. This chain is DNA polymerase zeta catalytic subunit (REV3L), found in Homo sapiens (Human).